The sequence spans 361 residues: Probable mannitol dehydrogenase (361 aa).

C51, H73, C104, C107, C110, C118, and C167 together coordinate Zn(2+).

The protein belongs to the zinc-containing alcohol dehydrogenase family. Requires Zn(2+) as cofactor.

It carries out the reaction D-mannitol + NAD(+) = D-mannose + NADH + H(+). Its function is as follows. Oxidizes mannitol to mannose. Provides the initial step by which translocated mannitol is committed to central metabolism and, by regulating mannitol pool size, is important in regulating salt tolerance at the cellular level. In Mesembryanthemum crystallinum (Common ice plant), this protein is Probable mannitol dehydrogenase (ELI3).